The primary structure comprises 371 residues: GTPase Obg (371 aa).

The 159-residue stretch at 1–159 folds into the Obg domain; that stretch reads MKFLDQAKVY…KTIWLRLKLI (159 aa). One can recognise an OBG-type G domain in the interval 160–327; it reads ADAGLVGLPN…VLRALRDIIV (168 aa). GTP is bound by residues 166 to 173, 191 to 195, 212 to 215, 279 to 282, and 308 to 310; these read GLPNAGKS, FTTLH, DIPG, SQID, and SAI. Residues serine 173 and threonine 193 each coordinate Mg(2+). Positions 337–371 are disordered; it reads APMKALKVRHRDMQSSGNEGESEDNSDRDDEEQQG. Residues 356 to 371 show a composition bias toward acidic residues; it reads GESEDNSDRDDEEQQG.

It belongs to the TRAFAC class OBG-HflX-like GTPase superfamily. OBG GTPase family. As to quaternary structure, monomer. Requires Mg(2+) as cofactor.

It localises to the cytoplasm. An essential GTPase which binds GTP, GDP and possibly (p)ppGpp with moderate affinity, with high nucleotide exchange rates and a fairly low GTP hydrolysis rate. Plays a role in control of the cell cycle, stress response, ribosome biogenesis and in those bacteria that undergo differentiation, in morphogenesis control. The sequence is that of GTPase Obg from Rhizobium rhizogenes (strain K84 / ATCC BAA-868) (Agrobacterium radiobacter).